The following is a 141-amino-acid chain: Large ribosomal subunit protein uL22 (141 aa).

This sequence belongs to the universal ribosomal protein uL22 family. In terms of assembly, part of the 50S ribosomal subunit.

In terms of biological role, this protein binds specifically to 23S rRNA; its binding is stimulated by other ribosomal proteins, e.g. L4, L17, and L20. It is important during the early stages of 50S assembly. It makes multiple contacts with different domains of the 23S rRNA in the assembled 50S subunit and ribosome. Functionally, the globular domain of the protein is located near the polypeptide exit tunnel on the outside of the subunit, while an extended beta-hairpin is found that lines the wall of the exit tunnel in the center of the 70S ribosome. In Frankia casuarinae (strain DSM 45818 / CECT 9043 / HFP020203 / CcI3), this protein is Large ribosomal subunit protein uL22.